The primary structure comprises 269 residues: UPF0162 protein bbp_163 (269 aa).

It belongs to the UPF0162 family.

This is UPF0162 protein bbp_163 from Buchnera aphidicola subsp. Baizongia pistaciae (strain Bp).